The following is a 352-amino-acid chain: Zinc finger protein 185 (352 aa).

2 disordered regions span residues 1–73 (MTTE…ELQS) and 86–121 (DVLPEKNQEPPALARPDSGLSSSTTEKIAHRQITPP). S18 carries the phosphoserine modification. Residues 61-72 (KKTTSSPTQELQ) are compositionally biased toward polar residues. T137 is subject to Phosphothreonine. Positions 251–268 (VSSGKPVSSHCDSPSSIE) are enriched in polar residues. The disordered stretch occupies residues 251-287 (VSSGKPVSSHCDSPSSIEDSLDLAKKPPHEGTPSERP). Basic and acidic residues predominate over residues 272–287 (DLAKKPPHEGTPSERP). An LIM zinc-binding domain is found at 292–347 (CTYCSHEIQDCPKITLEHLGICCHEYCFKCGICNKPMGDLLDQIFIHRDTIHCGKC).

In terms of tissue distribution, expressed in skin, kidney, ovary, testis. Also expressed in brain, cartilage, heart, lung, spleen and thymus.

The protein resides in the cytoplasm. The protein localises to the cytoskeleton. It is found in the cell junction. Its subcellular location is the focal adhesion. Its function is as follows. May be involved in the regulation of cellular proliferation and/or differentiation. In Mus musculus (Mouse), this protein is Zinc finger protein 185 (Znf185).